Here is a 320-residue protein sequence, read N- to C-terminus: cUMP-AMP-activated phospholipase (320 aa).

In terms of domain architecture, PNPLA spans 23–204 (LALDGGGAKG…CANNPTLFAI (182 aa)). The short motif at 27–32 (GGGAKG) is the GXGXXG element. Positions 59–63 (GTSTG) match the GXSXG motif. Catalysis depends on Ser61, which acts as the Nucleophile. Asp191 functions as the Proton acceptor in the catalytic mechanism. A DGA/G motif is present at residues 191–193 (DGG).

This sequence belongs to the patatin family.

It carries out the reaction a 1,2-diacyl-sn-glycero-3-phosphocholine + H2O = a 2-acyl-sn-glycero-3-phosphocholine + a fatty acid + H(+). Its activity is regulated as follows. Phospholipase activity is specifically activated upon 3',3'-cUAMP binding. Is not activated by the other cyclic dinucleotides 3',3'-cGAMP, 3',3'-c-diAMP and 3',3'-c-diGMP. Therefore, is specifically activated by only the nucleotide synthesized from its adjacently encoded nucleotidyltransferase (CdnE). Effector phospholipase of a CBASS antivirus system. CBASS (cyclic oligonucleotide-based antiphage signaling system) provides immunity against bacteriophage. The CD-NTase protein synthesizes cyclic nucleotides in response to infection; these serve as specific second messenger signals. The signals activate a diverse range of effectors, leading to bacterial cell death and thus abortive phage infection. A type II-A(UA) CBASS system. In terms of biological role, phospholipase that is activated upon binding to the cyclic dinucleotide (CDN) second messenger 3',3'-cyclic UMP-AMP (3',3'-cUAMP). This Escherichia coli protein is cUMP-AMP-activated phospholipase.